The chain runs to 422 residues: UDP-N-acetylglucosamine 1-carboxyvinyltransferase (422 aa).

22–23 (KN) lines the phosphoenolpyruvate pocket. R93 contacts UDP-N-acetyl-alpha-D-glucosamine. The Proton donor role is filled by C117. Position 117 is a 2-(S-cysteinyl)pyruvic acid O-phosphothioketal (C117). UDP-N-acetyl-alpha-D-glucosamine is bound by residues 122 to 126 (RPVDQ), D305, and I327.

It belongs to the EPSP synthase family. MurA subfamily.

Its subcellular location is the cytoplasm. It carries out the reaction phosphoenolpyruvate + UDP-N-acetyl-alpha-D-glucosamine = UDP-N-acetyl-3-O-(1-carboxyvinyl)-alpha-D-glucosamine + phosphate. It functions in the pathway cell wall biogenesis; peptidoglycan biosynthesis. Functionally, cell wall formation. Adds enolpyruvyl to UDP-N-acetylglucosamine. The protein is UDP-N-acetylglucosamine 1-carboxyvinyltransferase of Bordetella bronchiseptica (strain ATCC BAA-588 / NCTC 13252 / RB50) (Alcaligenes bronchisepticus).